A 445-amino-acid chain; its full sequence is Probable aminotransferase TAT3 (445 aa).

Belongs to the class-I pyridoxal-phosphate-dependent aminotransferase family. Pyridoxal 5'-phosphate is required as a cofactor. Expressed in roots, leaves and cauline leaves.

The protein is Probable aminotransferase TAT3 (TAT3) of Arabidopsis thaliana (Mouse-ear cress).